The sequence spans 67 residues: Phycobilisome 7.8 kDa linker polypeptide, allophycocyanin-associated, core (67 aa).

Residues 1-56 (MRMFRITACLPSPSKIRTQRELQNTFFTKLVPYDAWFREQQRIQKLGGKIIKVELA) enclose the CpcD-like domain.

The protein belongs to the phycobilisome linker protein family.

It is found in the cellular thylakoid membrane. Rod linker protein, associated with allophycocyanin. Linker polypeptides determine the state of aggregation and the location of the disk-shaped phycobiliprotein units within the phycobilisome and modulate their spectroscopic properties in order to mediate a directed and optimal energy transfer. The chain is Phycobilisome 7.8 kDa linker polypeptide, allophycocyanin-associated, core (apcC) from Synechococcus sp. (strain ATCC 27144 / PCC 6301 / SAUG 1402/1) (Anacystis nidulans).